A 211-amino-acid chain; its full sequence is Adenylyl-sulfate kinase (211 aa).

Position 32 to 39 (32 to 39 (GLSASGKS)) interacts with ATP. Ser107 (phosphoserine intermediate) is an active-site residue.

It belongs to the APS kinase family. In terms of assembly, homodimer.

It carries out the reaction adenosine 5'-phosphosulfate + ATP = 3'-phosphoadenylyl sulfate + ADP + H(+). Its pathway is sulfur metabolism; hydrogen sulfide biosynthesis; sulfite from sulfate: step 2/3. Catalyzes the synthesis of activated sulfate. In Penicillium chrysogenum (Penicillium notatum), this protein is Adenylyl-sulfate kinase.